A 460-amino-acid chain; its full sequence is L-seryl-tRNA(Sec) selenium transferase (460 aa).

Position 293 is an N6-(pyridoxal phosphate)lysine (K293).

The protein belongs to the SelA family. Requires pyridoxal 5'-phosphate as cofactor.

It localises to the cytoplasm. The catalysed reaction is L-seryl-tRNA(Sec) + selenophosphate + H(+) = L-selenocysteinyl-tRNA(Sec) + phosphate. It participates in aminoacyl-tRNA biosynthesis; selenocysteinyl-tRNA(Sec) biosynthesis; selenocysteinyl-tRNA(Sec) from L-seryl-tRNA(Sec) (bacterial route): step 1/1. Converts seryl-tRNA(Sec) to selenocysteinyl-tRNA(Sec) required for selenoprotein biosynthesis. This Pasteurella multocida (strain Pm70) protein is L-seryl-tRNA(Sec) selenium transferase.